We begin with the raw amino-acid sequence, 730 residues long: Probable G-protein coupled receptor 149 (730 aa).

At 1–34 (MSFFLSNLTNDSRLWKVSHNSTDLMNSPETLTLS) the chain is on the extracellular side. Asparagine 7, asparagine 10, and asparagine 20 each carry an N-linked (GlcNAc...) asparagine glycan. The helical transmembrane segment at 35-55 (LFCLICLMTLVALVGSIFSLV) threads the bilayer. Topologically, residues 56-68 (SLLTMQYRTVVSM) are cytoplasmic. Residues 69-89 (LVTSWSVDDLLSVLSVAIFMV) traverse the membrane as a helical segment. At 90–108 (LQWPREAPGYFQSLCTTSA) the chain is on the extracellular side. Cysteine 104 and cysteine 181 form a disulfide bridge. The chain crosses the membrane as a helical span at residues 109-131 (LLYMCQGLSSNLKATLIVFYNFY). At 132 to 148 (TMHRTVVSQSSSWRSGQ) the chain is on the cytoplasmic side. The chain crosses the membrane as a helical span at residues 149–169 (VLGVALTVWAVSLLLASLPLC). Residues 170-188 (GWGVFVRTPWGCLTDCSSP) lie on the Extracellular side of the membrane. Residues 189 to 209 (YVLLLFAVYASAFGLLAVLSV) form a helical membrane-spanning segment. Over 210-308 (PLTHQLLCSE…SFPVSLAQKR (99 aa)) the chain is Cytoplasmic. A helical transmembrane segment spans residues 309–329 (FALILALTKVILWLPMMIHMV). Residues 330–340 (VKHVVGFQSLP) lie on the Extracellular side of the membrane. A helical membrane pass occupies residues 341 to 361 (VDMLSFLLTLLASTVTPVFVL). Topologically, residues 362 to 730 (SKRWAHLPCG…RKREAESKGN (369 aa)) are cytoplasmic.

It belongs to the G-protein coupled receptor 1 family. Expressed exclusively in brain and testis.

It is found in the cell membrane. Orphan receptor. The polypeptide is Probable G-protein coupled receptor 149 (Gpr149) (Rattus norvegicus (Rat)).